We begin with the raw amino-acid sequence, 157 residues long: Transcription elongation factor GreA (157 aa).

Residues 25 to 43 show a composition bias toward basic and acidic residues; it reads EGRAKVAEQLSEARDKGDL. The segment at 25-47 is disordered; it reads EGRAKVAEQLSEARDKGDLSENA. Positions 43-79 form a coiled coil; that stretch reads LSENAEYDAAKEAQEILERRIAKLEELMINARVINKD.

Belongs to the GreA/GreB family.

Functionally, necessary for efficient RNA polymerase transcription elongation past template-encoded arresting sites. The arresting sites in DNA have the property of trapping a certain fraction of elongating RNA polymerases that pass through, resulting in locked ternary complexes. Cleavage of the nascent transcript by cleavage factors such as GreA or GreB allows the resumption of elongation from the new 3'terminus. GreA releases sequences of 2 to 3 nucleotides. The polypeptide is Transcription elongation factor GreA (Amoebophilus asiaticus (strain 5a2)).